Reading from the N-terminus, the 354-residue chain is Homer protein homolog 2 (354 aa).

The 110-residue stretch at 1-110 folds into the WH1 domain; it reads MGEQPIFTTR…EKFQEVKEAA (110 aa). The stretch at 92–122 forms a coiled coil; the sequence is SEQQLTKFAEKFQEVKEAAKIAKDKTQEKIE. Residues 112–122 show a composition bias toward basic and acidic residues; the sequence is IAKDKTQEKIE. Positions 112–166 are disordered; the sequence is IAKDKTQEKIETSSNHSQESGRETPSSTQASSVNGTDDEKASHAGPANTHLKSEN. The segment covering 123-146 has biased composition (polar residues); that stretch reads TSSNHSQESGRETPSSTQASSVNG. Residues 160–329 adopt a coiled-coil conformation; sequence THLKSENDKL…RHLKVELKSF (170 aa).

It belongs to the Homer family. In terms of assembly, forms coiled-coil structures that mediate homo- and heteromultimerization. Interacts with NFATC2; interaction is reduced by AKT activation. Interacts with NFATC1 and NFATC4. Interacts with DAGLA (via PPXXF motif); this interaction is required for the cell membrane localization of DAGLA.

The protein resides in the cytoplasm. It localises to the cell membrane. It is found in the postsynaptic density. Its subcellular location is the synapse. The protein localises to the cell projection. The protein resides in the stereocilium. In terms of biological role, postsynaptic density scaffolding protein. Binds and cross-links cytoplasmic regions of GRM1, GRM5, ITPR1, DNM3, RYR1, RYR2, SHANK1 and SHANK3. By physically linking GRM1 and GRM5 with ER-associated ITPR1 receptors, it aids the coupling of surface receptors to intracellular calcium release. May also couple GRM1 to PI3 kinase through its interaction with AGAP2. Isoforms can be differently regulated and may play an important role in maintaining the plasticity at glutamatergic synapses. Required for normal hearing. Negatively regulates T cell activation by inhibiting the calcineurin-NFAT pathway. Acts by competing with calcineurin/PPP3CA for NFAT protein binding, hence preventing NFAT activation by PPP3CA. This is Homer protein homolog 2 from Homo sapiens (Human).